The following is a 253-amino-acid chain: Patatin-like phospholipase domain-containing protein 4 (253 aa).

The PNPLA domain maps to Leu6–Gly176. The GXSXG signature appears at Gly41 to Gly45. Ser43 acts as the Nucleophile in catalysis. Asp163 serves as the catalytic Proton acceptor. A DGA/G motif is present at residues Asp163–Gly165.

In terms of tissue distribution, expressed in all tissues examined, including heart, brain, placenta, lung, liver, muscle, kidney, pancreas and spleen.

The protein localises to the mitochondrion. The enzyme catalyses a triacylglycerol + H2O = a diacylglycerol + a fatty acid + H(+). The catalysed reaction is a 1,2-diacyl-sn-glycero-3-phosphocholine + H2O = a 1-acyl-sn-glycero-3-phosphocholine + a fatty acid + H(+). It carries out the reaction an all-trans-retinyl ester + H2O = all-trans-retinol + a fatty acid + H(+). It catalyses the reaction 2 a 1-acylglycerol = a 1,2-diacylglycerol + glycerol. The enzyme catalyses a 1-acylglycerol + a 1,2-diacylglycerol = a triacylglycerol + glycerol. The catalysed reaction is a 1-acylglycerol + a 1,3-diacylglycerol = a triacylglycerol + glycerol. It carries out the reaction a triacylglycerol + H2O = a 1,2-diacylglycerol + a fatty acid + H(+). It catalyses the reaction a triacylglycerol + H2O = a 1,3-diacylglycerol + a fatty acid + H(+). The enzyme catalyses a triacylglycerol + all-trans-retinol = an all-trans-retinyl ester + a diacylglycerol. The catalysed reaction is 2 1-(9Z-octadecenoyl)-glycerol = 1,2-di-(9Z-octadecenoyl)-glycerol + glycerol. It carries out the reaction 1-(9Z-octadecenoyl)-glycerol + 1,2-di-(9Z-octadecenoyl)-glycerol = 1,2,3-tri-(9Z-octadecenoyl)-glycerol + glycerol. It catalyses the reaction 1-(9Z-octadecenoyl)-glycerol + 1,3-di-(9Z-octadecenoyl)-glycerol = 1,2,3-tri-(9Z-octadecenoyl)-glycerol + glycerol. The enzyme catalyses 1,2-di-(9Z-octadecenoyl)-glycerol + (9Z)-octadecenoate + H(+) = 1,2,3-tri-(9Z-octadecenoyl)-glycerol + H2O. The catalysed reaction is 1,2,3-tri-(9Z-octadecenoyl)-glycerol + H2O = 1,3-di-(9Z-octadecenoyl)-glycerol + (9Z)-octadecenoate + H(+). It carries out the reaction all-trans-retinyl hexadecanoate + H2O = all-trans-retinol + hexadecanoate + H(+). It catalyses the reaction 1,2,3-tri-(9Z-octadecenoyl)-glycerol + all-trans-retinol = all-trans-retinyl 9Z-octadecenoate + di-(9Z)-octadecenoylglycerol. With respect to regulation, the triglyceride lipase activity is inhibited by BEL ((E)-6-(bromomethylene)-3-(1-naphthalenyl)-2H-tetrahydropyran-2-one), a suicide substrate inhibitor. In terms of biological role, has abundant triacylglycerol lipase activity. Transfers fatty acid from triglyceride to retinol, hydrolyzes retinylesters, and generates 1,3-diacylglycerol from triglycerides. Additionally possesses acylglycerol transacylase and phospholipase A2 activities. This is Patatin-like phospholipase domain-containing protein 4 from Homo sapiens (Human).